Reading from the N-terminus, the 506-residue chain is Tyrosine-protein kinase FRK (506 aa).

Residues 43–111 form the SH3 domain; it reads SQGQYFVALF…PSNYVAEDRS (69 aa). An SH2 domain is found at 117–209; it reads WFFGAIKRAD…GLCVKLEKPC (93 aa). At threonine 179 the chain carries Phosphothreonine. Positions 235–492 constitute a Protein kinase domain; it reads IQLLKRLGSG…TLHWKLEDYF (258 aa). ATP-binding positions include 241–249 and lysine 263; that span reads LGSGQFGEV. Catalysis depends on aspartate 355, which acts as the Proton acceptor. Tyrosine 388 carries the phosphotyrosine; by autocatalysis modification.

The protein belongs to the protein kinase superfamily. Tyr protein kinase family. SRC subfamily. As to quaternary structure, interacts (via the SH3-domain) with PTEN. Interacts with RB1. In terms of tissue distribution, highly expressed in stomach, small intestine and colon. Concentrated in the brush border membranes of epithelial cells, throughout the maturation axis of the adult small intestine.

It localises to the cytoplasm. The protein resides in the nucleus. It catalyses the reaction L-tyrosyl-[protein] + ATP = O-phospho-L-tyrosyl-[protein] + ADP + H(+). Non-receptor tyrosine-protein kinase that negatively regulates cell proliferation. Positively regulates PTEN protein stability through phosphorylation of PTEN on 'Tyr-336', which in turn prevents its ubiquitination and degradation, possibly by reducing its binding to NEDD4. May function as a tumor suppressor. The sequence is that of Tyrosine-protein kinase FRK (Frk) from Rattus norvegicus (Rat).